The chain runs to 236 residues: 2-C-methyl-D-erythritol 4-phosphate cytidylyltransferase (236 aa).

It belongs to the IspD/TarI cytidylyltransferase family. IspD subfamily. As to quaternary structure, homodimer.

It catalyses the reaction 2-C-methyl-D-erythritol 4-phosphate + CTP + H(+) = 4-CDP-2-C-methyl-D-erythritol + diphosphate. It functions in the pathway isoprenoid biosynthesis; isopentenyl diphosphate biosynthesis via DXP pathway; isopentenyl diphosphate from 1-deoxy-D-xylulose 5-phosphate: step 2/6. In terms of biological role, catalyzes the formation of 4-diphosphocytidyl-2-C-methyl-D-erythritol from CTP and 2-C-methyl-D-erythritol 4-phosphate (MEP). The polypeptide is 2-C-methyl-D-erythritol 4-phosphate cytidylyltransferase (Escherichia fergusonii (strain ATCC 35469 / DSM 13698 / CCUG 18766 / IAM 14443 / JCM 21226 / LMG 7866 / NBRC 102419 / NCTC 12128 / CDC 0568-73)).